Consider the following 622-residue polypeptide: Probable potassium transport system protein Kup (622 aa).

12 helical membrane passes run 7-27 (LAIG…LYAF), 44-64 (VLGV…IQYV), 95-115 (GWLV…DSMI), 133-153 (PELQ…LFVL), 165-185 (FAPV…ISIV), 199-219 (AVLF…SVVL), 243-263 (WFGF…AMIV), 290-310 (LVIL…SGAF), 338-358 (IYIP…VLTF), 370-390 (IAVT…LVGV), 395-415 (WYYA…YFAA), and 422-442 (DGGW…TTWA).

The protein belongs to the HAK/KUP transporter (TC 2.A.72) family.

The protein localises to the cell inner membrane. The enzyme catalyses K(+)(in) + H(+)(in) = K(+)(out) + H(+)(out). Transport of potassium into the cell. Likely operates as a K(+):H(+) symporter. The sequence is that of Probable potassium transport system protein Kup from Erythrobacter litoralis (strain HTCC2594).